The sequence spans 469 residues: Tubulin gamma-1 chain (469 aa).

142-148 (AGGTGSG) lines the GTP pocket.

The protein belongs to the tubulin family.

The protein localises to the cytoplasm. It is found in the cytoskeleton. The protein resides in the microtubule organizing center. Its function is as follows. Tubulin is the major constituent of microtubules. The gamma chain is found at microtubule organizing centers (MTOC) such as the spindle poles, suggesting that it is involved in the minus-end nucleation of microtubule assembly. The chain is Tubulin gamma-1 chain (TUBG1) from Zea mays (Maize).